The sequence spans 584 residues: Potassium-transporting ATPase potassium-binding subunit (584 aa).

10 helical membrane passes run 8–28 (FLVL…EFMF), 65–85 (SFAV…FILQ), 139–159 (VQNF…IYGF), 172–192 (VLLL…ALVL), 262–282 (FTDL…CFMF), 292–312 (GIAI…LGIW), 398–418 (GLYC…LMVG), 440–460 (ILIP…ITAG), 507–527 (MFVG…AFVA), and 544–564 (LFII…FLPA).

It belongs to the KdpA family. The system is composed of three essential subunits: KdpA, KdpB and KdpC.

Its subcellular location is the cell membrane. Functionally, part of the high-affinity ATP-driven potassium transport (or Kdp) system, which catalyzes the hydrolysis of ATP coupled with the electrogenic transport of potassium into the cytoplasm. This subunit binds the extracellular potassium ions and delivers the ions to the membrane domain of KdpB through an intramembrane tunnel. This chain is Potassium-transporting ATPase potassium-binding subunit, found in Methanoregula boonei (strain DSM 21154 / JCM 14090 / 6A8).